An 899-amino-acid polypeptide reads, in one-letter code: Core protein VP3 (899 aa).

Positions 1–21 are disordered; that stretch reads MADPPDANVPKTSPYLKGDEL.

It belongs to the orbivirus VP3 family.

It localises to the virion. Its function is as follows. The VP3 protein is one of the five proteins (with VP1, VP4, VP6 and VP7) which form the inner capsid of the virus. The polypeptide is Core protein VP3 (Segment-3) (Epizootic hemorrhagic disease virus 1 (EHDV-1)).